Consider the following 324-residue polypeptide: Beta-ketoacyl-[acyl-carrier-protein] synthase III (324 aa).

Active-site residues include Cys-112 and His-249. The segment at 250 to 254 (QANRR) is ACP-binding. Asn-279 is an active-site residue.

The protein belongs to the thiolase-like superfamily. FabH family. Homodimer.

Its subcellular location is the cytoplasm. The enzyme catalyses malonyl-[ACP] + acetyl-CoA + H(+) = 3-oxobutanoyl-[ACP] + CO2 + CoA. The protein operates within lipid metabolism; fatty acid biosynthesis. In terms of biological role, catalyzes the condensation reaction of fatty acid synthesis by the addition to an acyl acceptor of two carbons from malonyl-ACP. Catalyzes the first condensation reaction which initiates fatty acid synthesis and may therefore play a role in governing the total rate of fatty acid production. Possesses both acetoacetyl-ACP synthase and acetyl transacylase activities. Its substrate specificity determines the biosynthesis of branched-chain and/or straight-chain of fatty acids. In Streptococcus pyogenes serotype M2 (strain MGAS10270), this protein is Beta-ketoacyl-[acyl-carrier-protein] synthase III.